The chain runs to 306 residues: Probable zinc metalloprotease VDBG_06923 (306 aa).

A signal peptide spans 1–28 (MNYEAEQPGANDDASGVAVALELARVLA). Residues Asp-12 and Glu-45 each coordinate Zn(2+). Asn-60 carries an N-linked (GlcNAc...) asparagine glycan. Residue Asp-72 participates in Zn(2+) binding. The Fibronectin type-III domain maps to 218-306 (APAKVNNVRV…KSPVTIPFPT (89 aa)). N-linked (GlcNAc...) asparagine glycans are attached at residues Asn-228, Asn-234, and Asn-244.

Belongs to the peptidase M28 family. M28B subfamily. It depends on Zn(2+) as a cofactor.

The protein localises to the secreted. This Verticillium alfalfae (strain VaMs.102 / ATCC MYA-4576 / FGSC 10136) (Verticillium wilt of alfalfa) protein is Probable zinc metalloprotease VDBG_06923.